The sequence spans 184 residues: Flavin prenyltransferase UbiX (184 aa).

FMN contacts are provided by residues 9–11 (GAS), Ser34, 85–88 (SMKT), and Arg120. Tyr150 and Arg166 together coordinate dimethylallyl phosphate.

The protein belongs to the UbiX/PAD1 family.

It carries out the reaction dimethylallyl phosphate + FMNH2 = prenylated FMNH2 + phosphate. Its function is as follows. Flavin prenyltransferase that catalyzes the synthesis of the prenylated FMN cofactor (prenyl-FMN) for 4-hydroxy-3-polyprenylbenzoic acid decarboxylase UbiD. The prenyltransferase is metal-independent and links a dimethylallyl moiety from dimethylallyl monophosphate (DMAP) to the flavin N5 and C6 atoms of FMN. In Methanocaldococcus jannaschii (strain ATCC 43067 / DSM 2661 / JAL-1 / JCM 10045 / NBRC 100440) (Methanococcus jannaschii), this protein is Flavin prenyltransferase UbiX.